Reading from the N-terminus, the 673-residue chain is DNA ligase (673 aa).

Residues 35–39, 84–85, and Glu-115 contribute to the NAD(+) site; these read DAEYD and SL. The N6-AMP-lysine intermediate role is filled by Lys-117. NAD(+) contacts are provided by Arg-138, Glu-175, Lys-292, and Lys-316. Zn(2+)-binding residues include Cys-410, Cys-413, Cys-428, and Cys-434. One can recognise a BRCT domain in the interval 592–673; sequence PRKLPLQGLV…FLDLLERGRP (82 aa).

The protein belongs to the NAD-dependent DNA ligase family. LigA subfamily. It depends on Mg(2+) as a cofactor. The cofactor is Mn(2+).

The enzyme catalyses NAD(+) + (deoxyribonucleotide)n-3'-hydroxyl + 5'-phospho-(deoxyribonucleotide)m = (deoxyribonucleotide)n+m + AMP + beta-nicotinamide D-nucleotide.. Its function is as follows. DNA ligase that catalyzes the formation of phosphodiester linkages between 5'-phosphoryl and 3'-hydroxyl groups in double-stranded DNA using NAD as a coenzyme and as the energy source for the reaction. It is essential for DNA replication and repair of damaged DNA. This Methylococcus capsulatus (strain ATCC 33009 / NCIMB 11132 / Bath) protein is DNA ligase.